A 451-amino-acid chain; its full sequence is UPF0761 membrane protein Hhal_0704 (451 aa).

6 consecutive transmembrane segments (helical) span residues 66–86, 122–142, 162–182, 204–224, 228–248, and 268–288; these read LLAIVPLMTIGFSVLAAFPVF, ELTAVGIAGLTVTALLLLNTI, FMVYWTVLTMGPLLLGVSVAS, LLNLAPFVVQAIVFSLIYSLV, SVPVLHAVIGGVVASGLFELA, and ALAALPIFLVWLYISWLVILI.

This sequence belongs to the UPF0761 family.

The protein localises to the cell inner membrane. In Halorhodospira halophila (strain DSM 244 / SL1) (Ectothiorhodospira halophila (strain DSM 244 / SL1)), this protein is UPF0761 membrane protein Hhal_0704.